We begin with the raw amino-acid sequence, 506 residues long: MTAPKPVVLCILDGWGLRAEREANAVALAETPTFDRLMATCPNATLVTHGPDVGLPRGQMGNSEVGHTNIGAGRVVAMDLGAIDLAIEEGSFPQNPALRDFIGKVKAKSGTAHLMGVVSDGGVHGHIQHLISAVEVLAGEGIPVVIHAITDGRDVAPTSAGEFVGQLVRVLPEGARIGTVIGRYWAMDRDKRWDRVKRASDAMLHATGEHAPDAEAAVAAALARGETDEFIAPTVVGDYAGARDGDGFFCLNFRADRAREILAGLAQPGFDAYDTGARPDWSAFLGMVDYSKEHDRFMTTAYPKPVIRNTLGEWVASHGLRQFRIAETEKYPHVTFFLNGGREAPETGEDRYMANSPKVATYDLQPEMSAPDVSDHLVEAIGAGYDLIVVNYANPDMVGHTGDLKAAMAAVEEVDRGLGRAVEAVTKAGGAMIVTADHGNCETMVDPETGGPHTAHTTNPVPVILVNGPAGARLHAGRLADLAPTLLQLMQLPQPEEMTGRSLIDA.

Residues D13 and S63 each contribute to the Mn(2+) site. Catalysis depends on S63, which acts as the Phosphoserine intermediate. Substrate-binding positions include H124, 153–154 (RD), R183, R189, 254–257 (RADR), and K330. D396, H400, D437, H438, and H456 together coordinate Mn(2+).

This sequence belongs to the BPG-independent phosphoglycerate mutase family. In terms of assembly, monomer. The cofactor is Mn(2+).

It carries out the reaction (2R)-2-phosphoglycerate = (2R)-3-phosphoglycerate. It functions in the pathway carbohydrate degradation; glycolysis; pyruvate from D-glyceraldehyde 3-phosphate: step 3/5. Its function is as follows. Catalyzes the interconversion of 2-phosphoglycerate and 3-phosphoglycerate. This Cereibacter sphaeroides (strain ATCC 17023 / DSM 158 / JCM 6121 / CCUG 31486 / LMG 2827 / NBRC 12203 / NCIMB 8253 / ATH 2.4.1.) (Rhodobacter sphaeroides) protein is 2,3-bisphosphoglycerate-independent phosphoglycerate mutase.